Consider the following 173-residue polypeptide: Small ribosomal subunit protein uS7 (173 aa).

It belongs to the universal ribosomal protein uS7 family. As to quaternary structure, part of the 30S ribosomal subunit. Contacts proteins S9 and S11.

In terms of biological role, one of the primary rRNA binding proteins, it binds directly to 16S rRNA where it nucleates assembly of the head domain of the 30S subunit. Is located at the subunit interface close to the decoding center, probably blocks exit of the E-site tRNA. The chain is Small ribosomal subunit protein uS7 from Orientia tsutsugamushi (strain Boryong) (Rickettsia tsutsugamushi).